Reading from the N-terminus, the 24-residue chain is Homotarsinin (24 aa).

Arg24 carries the arginine amide modification.

Homodimer; disulfide-linked. Expressed by the skin glands.

The protein localises to the secreted. In terms of biological role, antimicrobial peptide. Active against Gram-negative bacteria E.coli ATCC 25922 (MIC=1.5 uM) and P.aeruginosa ATTC 27853 (MIC=23.2 uM) and against Gram-positive bacterium S.aureus ATCC 29313 (MIC=11.6 uM). Has no hemolytic activity. Associates with and disrupts membranes in vitro. The polypeptide is Homotarsinin (Phyllomedusa tarsius (Brownbelly leaf frog)).